We begin with the raw amino-acid sequence, 70 residues long: Turripeptide Gsp9.3 (70 aa).

An N-terminal signal peptide occupies residues 1–20 (MKVYCLLLVLLVGLVSQAHG). Positions 21–70 (QLDKKCQMVCTFDYRPVCGSDGRTYPNKCTLTSTACMSQRSITVFHDGEC) constitute a Kazal-like domain. 3 disulfide bridges follow: Cys-26–Cys-56, Cys-30–Cys-49, and Cys-38–Cys-70.

Belongs to the conopeptide P-like superfamily. Expressed by the venom duct.

The protein resides in the secreted. Functionally, acts as a neurotoxin by inhibiting an ion channel. May also act as a serine protease inhibitor, since it possess the kazal serine protease inhibitor signature. The polypeptide is Turripeptide Gsp9.3 (Gemmula speciosa (Splendid gem-turris)).